The chain runs to 145 residues: Cytochrome c-type biogenesis protein CcmE (145 aa).

At 1–7 the chain is on the cytoplasmic side; that stretch reads MKAKHQR. A helical; Signal-anchor for type II membrane protein membrane pass occupies residues 8 to 28; sequence LILAVAALCGVAGAGVLAASA. The Periplasmic portion of the chain corresponds to 29–145; it reads LRDEAAYFRT…PKNMKAAVEG (117 aa). Positions 123 and 127 each coordinate heme.

Belongs to the CcmE/CycJ family.

The protein resides in the cell inner membrane. Heme chaperone required for the biogenesis of c-type cytochromes. Transiently binds heme delivered by CcmC and transfers the heme to apo-cytochromes in a process facilitated by CcmF and CcmH. This is Cytochrome c-type biogenesis protein CcmE from Sphingopyxis alaskensis (strain DSM 13593 / LMG 18877 / RB2256) (Sphingomonas alaskensis).